Here is a 183-residue protein sequence, read N- to C-terminus: Ribosome-binding factor A (183 aa).

A disordered region spans residues 132–183; sequence PAGEADPYRDNGSVAQSPAPGGLGIRTSDGPEAVEAPLTCGGDTGDDDRPKE.

It belongs to the RbfA family. In terms of assembly, monomer. Binds 30S ribosomal subunits, but not 50S ribosomal subunits or 70S ribosomes.

Its subcellular location is the cytoplasm. One of several proteins that assist in the late maturation steps of the functional core of the 30S ribosomal subunit. Associates with free 30S ribosomal subunits (but not with 30S subunits that are part of 70S ribosomes or polysomes). Required for efficient processing of 16S rRNA. May interact with the 5'-terminal helix region of 16S rRNA. The polypeptide is Ribosome-binding factor A (Mycobacterium tuberculosis (strain ATCC 25177 / H37Ra)).